The primary structure comprises 302 residues: Troponin T, cardiac muscle isoforms (302 aa).

Acidic residues predominate over residues 1–55 (MSDSEEVVEEYEQEQEEEYVEEEEEEWLEEDDGQEDQVDEEEEETEETTAEEQED). Disordered regions lie at residues 1–99 (MSDS…GERL), 138–230 (KDRI…RKPL), and 280–302 (SDHQKVKGSKAARGKTMVGGRWK). N-acetylserine is present on S2. S2 is modified (phosphoserine; by CK2). Residues 65–79 (EGDREQEPGEGESKP) are compositionally biased toward basic and acidic residues. A compositionally biased stretch (pro residues) spans 82-93 (KPFMPNLVPPKI). Basic and acidic residues-rich tracts occupy residues 138 to 186 (KDRI…EKEA) and 204 to 230 (KSEKKGGKKQTEREKKKKILSERRKPL).

It belongs to the troponin T family.

In terms of biological role, troponin T is the tropomyosin-binding subunit of troponin, the thin filament regulatory complex which confers calcium-sensitivity to striated muscle actomyosin ATPase activity. The protein is Troponin T, cardiac muscle isoforms (TNNT2) of Gallus gallus (Chicken).